The following is a 161-amino-acid chain: Sterile alpha motif domain-containing protein 12 (161 aa).

Residues 44–64 form a disordered region; the sequence is QKVPDQKGTPKRLQGEAETAK. Positions 77–143 constitute an SAM domain; the sequence is WTQQDVCKWL…LQQVLQLKVR (67 aa).

In Mus musculus (Mouse), this protein is Sterile alpha motif domain-containing protein 12 (Samd12).